Here is a 78-residue protein sequence, read N- to C-terminus: Large ribosomal subunit protein uL29 (78 aa).

The protein belongs to the universal ribosomal protein uL29 family.

The polypeptide is Large ribosomal subunit protein uL29 (Salinispora arenicola (strain CNS-205)).